The following is a 959-amino-acid chain: Translation initiation factor IF-2 (959 aa).

Over residues 1-10 the composition is skewed to basic and acidic residues; it reads MSDKTNDDKT. Residues 1–374 form a disordered region; it reads MSDKTNDDKT…SQMQETREKI (374 aa). Residues 27 to 37 show a composition bias toward polar residues; that stretch reads EQSTVRQNFSH. 2 stretches are compositionally biased toward low complexity: residues 63–118 and 128–138; these read AAAA…VTKP and QRPGGQQAQRP. Basic and acidic residues-rich tracts occupy residues 154-225 and 232-241; these read SEMD…EAAK and ARSERRDDAR. The span at 246 to 284 shows a compositional bias: low complexity; that stretch reads GARPQQAGRPQGGRPQPAGRPQQGSPRPAPIIADAAPIA. Positions 318 to 333 are enriched in basic and acidic residues; that stretch reads PEVRAPKVVKGEDDRR. Positions 457 to 626 constitute a tr-type G domain; that stretch reads SRPPVVTIMG…LLQAEMLDLK (170 aa). The G1 stretch occupies residues 466–473; it reads GHVDHGKT. 466–473 is a binding site for GTP; that stretch reads GHVDHGKT. A G2 region spans residues 491–495; sequence GITQH. The tract at residues 512-515 is G3; sequence DTPG. Residues 512–516 and 566–569 contribute to the GTP site; these read DTPGH and NKID. Positions 566-569 are G4; that stretch reads NKID. A G5 region spans residues 602–604; it reads SAK.

The protein belongs to the TRAFAC class translation factor GTPase superfamily. Classic translation factor GTPase family. IF-2 subfamily.

It is found in the cytoplasm. One of the essential components for the initiation of protein synthesis. Protects formylmethionyl-tRNA from spontaneous hydrolysis and promotes its binding to the 30S ribosomal subunits. Also involved in the hydrolysis of GTP during the formation of the 70S ribosomal complex. The protein is Translation initiation factor IF-2 of Brucella ovis (strain ATCC 25840 / 63/290 / NCTC 10512).